Here is a 292-residue protein sequence, read N- to C-terminus: Light-independent protochlorophyllide reductase iron-sulfur ATP-binding protein (292 aa).

ATP contacts are provided by residues 10 to 15 (GIGKST) and Lys-39. Ser-14 is a Mg(2+) binding site. Residue Cys-95 coordinates [4Fe-4S] cluster. Residue 182 to 183 (NR) participates in ATP binding.

Belongs to the NifH/BchL/ChlL family. Homodimer. Protochlorophyllide reductase is composed of three subunits; ChlL, ChlN and ChlB. [4Fe-4S] cluster serves as cofactor.

It is found in the plastid. It localises to the chloroplast. It carries out the reaction chlorophyllide a + oxidized 2[4Fe-4S]-[ferredoxin] + 2 ADP + 2 phosphate = protochlorophyllide a + reduced 2[4Fe-4S]-[ferredoxin] + 2 ATP + 2 H2O. The protein operates within porphyrin-containing compound metabolism; chlorophyll biosynthesis (light-independent). In terms of biological role, component of the dark-operative protochlorophyllide reductase (DPOR) that uses Mg-ATP and reduced ferredoxin to reduce ring D of protochlorophyllide (Pchlide) to form chlorophyllide a (Chlide). This reaction is light-independent. The L component serves as a unique electron donor to the NB-component of the complex, and binds Mg-ATP. This is Light-independent protochlorophyllide reductase iron-sulfur ATP-binding protein from Huperzia lucidula (Shining clubmoss).